A 568-amino-acid chain; its full sequence is Peroxisomal leader peptide-processing protease (568 aa).

The tract at residues 332 to 568 (TPRGLPLRDL…PLSEVPRSKL (237 aa)) is serine protease. Catalysis depends on charge relay system residues His374, Asp410, and Ser483.

Belongs to the peptidase S1B family. Homodimer. Forms a heterodimer with the C-terminal cleavage product (49 kDa form). Forms a heterodimer with the N-terminal cleavage product (10 kDa form). Interacts with PEX5. Interacts with LONP2. In terms of processing, self-cleavage gives rise to an N-terminal 10-kDa fragment and C-terminal 49-kDa fragment upon import into the peroxisomes. The full-lengh TYSND1 is the active the proteolytic processing of PTS1- and PTS2-proteins and in self-cleavage, and intermolecular self-cleavage of TYSND1 down-regulates its protease activity.

The protein resides in the peroxisome. Its activity is regulated as follows. Inhibited by N-ethylmaleimide (NEM). Not affected by leupeptin or trans-epoxysuccinyl-l-leucylamido-(4-gianidino) butane (E64). In terms of biological role, peroxisomal protease that mediates both the removal of the leader peptide from proteins containing a PTS2 target sequence and processes several PTS1-containing proteins. Catalyzes the processing of PTS1-proteins involved in the peroxisomal beta-oxidation of fatty acids. This chain is Peroxisomal leader peptide-processing protease (Tysnd1), found in Mus musculus (Mouse).